The following is a 124-amino-acid chain: Large ribosomal subunit protein bL12 (124 aa).

The protein belongs to the bacterial ribosomal protein bL12 family. In terms of assembly, homodimer. Part of the ribosomal stalk of the 50S ribosomal subunit. Forms a multimeric L10(L12)X complex, where L10 forms an elongated spine to which 2 to 4 L12 dimers bind in a sequential fashion. Binds GTP-bound translation factors.

Its function is as follows. Forms part of the ribosomal stalk which helps the ribosome interact with GTP-bound translation factors. Is thus essential for accurate translation. The protein is Large ribosomal subunit protein bL12 of Burkholderia lata (strain ATCC 17760 / DSM 23089 / LMG 22485 / NCIMB 9086 / R18194 / 383).